The sequence spans 377 residues: Queuine tRNA-ribosyltransferase (377 aa).

Aspartate 93 functions as the Proton acceptor in the catalytic mechanism. Substrate is bound by residues aspartate 93 to phenylalanine 97, aspartate 147, glutamine 191, and glycine 218. The tract at residues glycine 249–aspartate 255 is RNA binding. Aspartate 268 functions as the Nucleophile in the catalytic mechanism. The RNA binding; important for wobble base 34 recognition stretch occupies residues threonine 273–arginine 277. Cysteine 306, cysteine 308, cysteine 311, and histidine 337 together coordinate Zn(2+).

It belongs to the queuine tRNA-ribosyltransferase family. As to quaternary structure, homodimer. Within each dimer, one monomer is responsible for RNA recognition and catalysis, while the other monomer binds to the replacement base PreQ1. Zn(2+) serves as cofactor.

The catalysed reaction is 7-aminomethyl-7-carbaguanine + guanosine(34) in tRNA = 7-aminomethyl-7-carbaguanosine(34) in tRNA + guanine. It functions in the pathway tRNA modification; tRNA-queuosine biosynthesis. Its function is as follows. Catalyzes the base-exchange of a guanine (G) residue with the queuine precursor 7-aminomethyl-7-deazaguanine (PreQ1) at position 34 (anticodon wobble position) in tRNAs with GU(N) anticodons (tRNA-Asp, -Asn, -His and -Tyr). Catalysis occurs through a double-displacement mechanism. The nucleophile active site attacks the C1' of nucleotide 34 to detach the guanine base from the RNA, forming a covalent enzyme-RNA intermediate. The proton acceptor active site deprotonates the incoming PreQ1, allowing a nucleophilic attack on the C1' of the ribose to form the product. After dissociation, two additional enzymatic reactions on the tRNA convert PreQ1 to queuine (Q), resulting in the hypermodified nucleoside queuosine (7-(((4,5-cis-dihydroxy-2-cyclopenten-1-yl)amino)methyl)-7-deazaguanosine). In Oleidesulfovibrio alaskensis (strain ATCC BAA-1058 / DSM 17464 / G20) (Desulfovibrio alaskensis), this protein is Queuine tRNA-ribosyltransferase.